The primary structure comprises 327 residues: Lipoyl synthase (327 aa).

[4Fe-4S] cluster is bound by residues Cys-74, Cys-79, Cys-85, Cys-100, Cys-104, Cys-107, and Ser-314. In terms of domain architecture, Radical SAM core spans 86–303; the sequence is FSGGTATFMI…AEEGERMGFK (218 aa).

Belongs to the radical SAM superfamily. Lipoyl synthase family. The cofactor is [4Fe-4S] cluster.

It localises to the cytoplasm. It catalyses the reaction [[Fe-S] cluster scaffold protein carrying a second [4Fe-4S](2+) cluster] + N(6)-octanoyl-L-lysyl-[protein] + 2 oxidized [2Fe-2S]-[ferredoxin] + 2 S-adenosyl-L-methionine + 4 H(+) = [[Fe-S] cluster scaffold protein] + N(6)-[(R)-dihydrolipoyl]-L-lysyl-[protein] + 4 Fe(3+) + 2 hydrogen sulfide + 2 5'-deoxyadenosine + 2 L-methionine + 2 reduced [2Fe-2S]-[ferredoxin]. It participates in protein modification; protein lipoylation via endogenous pathway; protein N(6)-(lipoyl)lysine from octanoyl-[acyl-carrier-protein]: step 2/2. In terms of biological role, catalyzes the radical-mediated insertion of two sulfur atoms into the C-6 and C-8 positions of the octanoyl moiety bound to the lipoyl domains of lipoate-dependent enzymes, thereby converting the octanoylated domains into lipoylated derivatives. The sequence is that of Lipoyl synthase from Pseudomonas paraeruginosa (strain DSM 24068 / PA7) (Pseudomonas aeruginosa (strain PA7)).